The sequence spans 704 residues: Elongation factor G (704 aa).

Residues 10 to 290 (KKVRNIGIMA…AVVDYLPSPL (281 aa)) enclose the tr-type G domain. GTP contacts are provided by residues 19-26 (AHIDAGKT), 83-87 (DTPGH), and 137-140 (NKMD).

It belongs to the TRAFAC class translation factor GTPase superfamily. Classic translation factor GTPase family. EF-G/EF-2 subfamily.

It is found in the cytoplasm. In terms of biological role, catalyzes the GTP-dependent ribosomal translocation step during translation elongation. During this step, the ribosome changes from the pre-translocational (PRE) to the post-translocational (POST) state as the newly formed A-site-bound peptidyl-tRNA and P-site-bound deacylated tRNA move to the P and E sites, respectively. Catalyzes the coordinated movement of the two tRNA molecules, the mRNA and conformational changes in the ribosome. This chain is Elongation factor G, found in Kocuria rhizophila (strain ATCC 9341 / DSM 348 / NBRC 103217 / DC2201).